Here is a 152-residue protein sequence, read N- to C-terminus: Transcriptional regulator MraZ (152 aa).

SpoVT-AbrB domains lie at 5-52 (ATLV…PLPE) and 81-124 (ASEC…DETT).

It belongs to the MraZ family. As to quaternary structure, forms oligomers.

The protein resides in the cytoplasm. It is found in the nucleoid. Negatively regulates its own expression and that of the subsequent genes in the proximal part of the division and cell wall (dcw) gene cluster. Acts by binding directly to DNA. May also regulate the expression of genes outside the dcw cluster. The sequence is that of Transcriptional regulator MraZ from Salmonella typhi.